Here is a 155-residue protein sequence, read N- to C-terminus: Ribonuclease H (155 aa).

The RNase H type-1 domain occupies 1-142 (MLKQVEIFTD…CDELARAAAS (142 aa)). 4 residues coordinate Mg(2+): Asp10, Glu48, Asp70, and Asp134.

Belongs to the RNase H family. In terms of assembly, monomer. Mg(2+) is required as a cofactor.

It localises to the cytoplasm. The catalysed reaction is Endonucleolytic cleavage to 5'-phosphomonoester.. In terms of biological role, endonuclease that specifically degrades the RNA of RNA-DNA hybrids. The protein is Ribonuclease H of Klebsiella pneumoniae subsp. pneumoniae (strain ATCC 700721 / MGH 78578).